Here is a 366-residue protein sequence, read N- to C-terminus: Aminomethyltransferase (366 aa).

Belongs to the GcvT family. The glycine cleavage system is composed of four proteins: P, T, L and H.

The catalysed reaction is N(6)-[(R)-S(8)-aminomethyldihydrolipoyl]-L-lysyl-[protein] + (6S)-5,6,7,8-tetrahydrofolate = N(6)-[(R)-dihydrolipoyl]-L-lysyl-[protein] + (6R)-5,10-methylene-5,6,7,8-tetrahydrofolate + NH4(+). In terms of biological role, the glycine cleavage system catalyzes the degradation of glycine. The chain is Aminomethyltransferase from Bacillus mycoides (strain KBAB4) (Bacillus weihenstephanensis).